Reading from the N-terminus, the 475-residue chain is Aspartic proteinase 39 (475 aa).

The signal sequence occupies residues 1–23 (MELRRKLCIVVAVFVIVIEFASA). One can recognise a Peptidase A1 domain in the interval 74 to 422 (YFTKIKLGSP…DLDNEVIGWA (349 aa)). Asp92 is an active-site residue. Asn124 and Asn222 each carry an N-linked (GlcNAc...) asparagine glycan. Residue Asp303 is part of the active site. Residues Asn425 and Asn446 are each glycosylated (N-linked (GlcNAc...) asparagine). Residue Ser449 is the site of GPI-anchor amidated serine attachment. Positions 450 to 475 (APRLLMITKLLTILSPLIVMAFTSLA) are cleaved as a propeptide — removed in mature form.

It belongs to the peptidase A1 family. In terms of tissue distribution, highly expressed in pollen and pollen tubes. Mostly expressed in inflorescence, flowers and siliques, and barely in leaves and seedlings.

The protein resides in the cell membrane. It is found in the cytoplasm. The protein localises to the cytosol. Functionally, displays aspartic proteolytic activity. Together with A36, contributes to pollen and ovule development, including the apical cell wall constitution of the growing pollen tubes. In Arabidopsis thaliana (Mouse-ear cress), this protein is Aspartic proteinase 39.